Consider the following 282-residue polypeptide: 4-hydroxy-3-methylbut-2-enyl diphosphate reductase (282 aa).

Cys12 contributes to the [4Fe-4S] cluster binding site. Residues His40 and His72 each coordinate (2E)-4-hydroxy-3-methylbut-2-enyl diphosphate. 2 residues coordinate dimethylallyl diphosphate: His40 and His72. 2 residues coordinate isopentenyl diphosphate: His40 and His72. Position 94 (Cys94) interacts with [4Fe-4S] cluster. His122 contacts (2E)-4-hydroxy-3-methylbut-2-enyl diphosphate. His122 contacts dimethylallyl diphosphate. Position 122 (His122) interacts with isopentenyl diphosphate. Catalysis depends on Glu124, which acts as the Proton donor. Thr160 is a binding site for (2E)-4-hydroxy-3-methylbut-2-enyl diphosphate. [4Fe-4S] cluster is bound at residue Cys188. (2E)-4-hydroxy-3-methylbut-2-enyl diphosphate-binding residues include Ser216, Asn218, and Ser260. Ser216, Asn218, and Ser260 together coordinate dimethylallyl diphosphate. Isopentenyl diphosphate-binding residues include Ser216, Asn218, and Ser260.

It belongs to the IspH family. The cofactor is [4Fe-4S] cluster.

It catalyses the reaction isopentenyl diphosphate + 2 oxidized [2Fe-2S]-[ferredoxin] + H2O = (2E)-4-hydroxy-3-methylbut-2-enyl diphosphate + 2 reduced [2Fe-2S]-[ferredoxin] + 2 H(+). It carries out the reaction dimethylallyl diphosphate + 2 oxidized [2Fe-2S]-[ferredoxin] + H2O = (2E)-4-hydroxy-3-methylbut-2-enyl diphosphate + 2 reduced [2Fe-2S]-[ferredoxin] + 2 H(+). The protein operates within isoprenoid biosynthesis; dimethylallyl diphosphate biosynthesis; dimethylallyl diphosphate from (2E)-4-hydroxy-3-methylbutenyl diphosphate: step 1/1. It functions in the pathway isoprenoid biosynthesis; isopentenyl diphosphate biosynthesis via DXP pathway; isopentenyl diphosphate from 1-deoxy-D-xylulose 5-phosphate: step 6/6. Catalyzes the conversion of 1-hydroxy-2-methyl-2-(E)-butenyl 4-diphosphate (HMBPP) into a mixture of isopentenyl diphosphate (IPP) and dimethylallyl diphosphate (DMAPP). Acts in the terminal step of the DOXP/MEP pathway for isoprenoid precursor biosynthesis. The sequence is that of 4-hydroxy-3-methylbut-2-enyl diphosphate reductase from Geotalea uraniireducens (strain Rf4) (Geobacter uraniireducens).